A 341-amino-acid polypeptide reads, in one-letter code: S-adenosylmethionine:tRNA ribosyltransferase-isomerase (341 aa).

The protein belongs to the QueA family. Monomer.

The protein resides in the cytoplasm. It carries out the reaction 7-aminomethyl-7-carbaguanosine(34) in tRNA + S-adenosyl-L-methionine = epoxyqueuosine(34) in tRNA + adenine + L-methionine + 2 H(+). The protein operates within tRNA modification; tRNA-queuosine biosynthesis. In terms of biological role, transfers and isomerizes the ribose moiety from AdoMet to the 7-aminomethyl group of 7-deazaguanine (preQ1-tRNA) to give epoxyqueuosine (oQ-tRNA). This Chlorobium chlorochromatii (strain CaD3) protein is S-adenosylmethionine:tRNA ribosyltransferase-isomerase.